The primary structure comprises 427 residues: FAD-dependent monooxygenase OpS4 (427 aa).

Residues 1-22 form the signal peptide; it reads MGSIREPLHLVVIGGGLAGLSA. Glu-37 is an FAD binding site. Residue Asn-54 is glycosylated (N-linked (GlcNAc...) asparagine). FAD contacts are provided by Arg-112, Asp-306, and Ala-319.

Belongs to the paxM FAD-dependent monooxygenase family. Requires FAD as cofactor.

Its pathway is secondary metabolite biosynthesis. Its function is as follows. FAD-dependent monooxygenase; part of the gene cluster that mediates the biosynthesis of the bibenzoquinone oosporein, a metabolite required for fungal virulence that acts by evading host immunity to facilitate fungal multiplication in insects. The non-reducing polyketide synthase OpS1 produces orsellinic acid by condensing acetyl-CoA with 3 malonyl-CoA units. Orsellinic acid is then hydroxylated to benzenetriol by the hydroxylase OpS4. The intermediate is oxidized either nonenzymatically to 5,5'-dideoxy-oosporein or enzymatically to benzenetetrol by the oxidoreductase OpS7. The latter is further dimerized to oosporein by the catalase OpS5. OpS6 probably functions en route for protecting cells against oxidative stress by scavenging any leaked free radical form of benzenetetrol by activating the thiol group of glutathione. The chain is FAD-dependent monooxygenase OpS4 from Beauveria bassiana (strain ARSEF 2860) (White muscardine disease fungus).